The following is a 279-amino-acid chain: Protein COP1 SUPPRESSOR 2 (279 aa).

2 disordered regions span residues 1-29 (MPPK…ISEE) and 57-79 (SSTA…EGEK). Residues 68–79 (KPVEKTETEGEK) are compositionally biased toward basic and acidic residues. The stretch at 86–183 (DTFAQETAVL…EETEAAKKLL (98 aa)) forms a coiled coil. Residues 217-229 (LRREHPELYKDRG) are compositionally biased toward basic and acidic residues. The disordered stretch occupies residues 217–279 (LRREHPELYK…KRERNRVMRR (63 aa)). Positions 250–260 (ADSGKSRQAAT) are enriched in polar residues. Over residues 270–279 (KRERNRVMRR) the composition is skewed to basic residues.

The protein belongs to the TLS1 family. Interacts with COP1.

Its subcellular location is the nucleus. It is found in the nucleus speckle. Functionally, inhibits E3 ubiquitin-protein ligase activity of COP1, a central repressor of seedling photomorphogenesis. Represses COP1-mediated turnover of HY5 in the dark. Required for primary root development under normal light growth conditions. This is Protein COP1 SUPPRESSOR 2 from Arabidopsis thaliana (Mouse-ear cress).